The primary structure comprises 285 residues: NADH-cytochrome b5 reductase 1 (285 aa).

Residues 7-23 (LATFSVLVLFYKLFTYS) form a helical membrane-spanning segment. In terms of domain architecture, FAD-binding FR-type spans 40-144 (TEFREFELVE…SGPRGFYEYV (105 aa)). FAD-binding positions include 124 to 139 (GDMKIGEKINISGPRG) and 150 to 182 (HLAMVAGGTGITPMFQIMKAIARDPSDKTRVTL).

Belongs to the flavoprotein pyridine nucleotide cytochrome reductase family. Monomer. Component of the 2-(3-amino-3-carboxypropyl)histidine synthase complex composed of DPH1, DPH2, DPH3 and a NADH-dependent reductase, predominantly CBR1. It depends on FAD as a cofactor.

Its subcellular location is the mitochondrion outer membrane. The enzyme catalyses 2 Fe(III)-[cytochrome b5] + NADH = 2 Fe(II)-[cytochrome b5] + NAD(+) + H(+). It carries out the reaction 2 Fe(3+)-[Dph3] + NADH = 2 Fe(2+)-[Dph3] + NAD(+) + H(+). Its pathway is protein modification; peptidyl-diphthamide biosynthesis. NADH-dependent reductase for DPH3 and cytochrome b5. Required for the first step of diphthamide biosynthesis, a post-translational modification of histidine which occurs in elongation factor 2. DPH1 and DPH2 transfer a 3-amino-3-carboxypropyl (ACP) group from S-adenosyl-L-methionine (SAM) to a histidine residue, the reaction is assisted by a reduction system comprising DPH3 and a NADH-dependent reductase, predominantly CBR1. By reducing DPH3, also involved in the formation of the tRNA wobble base modification mcm5s 2U (5-methoxycarbonylmethyl-2-thiouridine), mediated by the elongator complex. The cytochrome b5/NADH cytochrome b5 reductase electron transfer system supports the catalytic activity of several sterol biosynthetic enzymes. The protein is NADH-cytochrome b5 reductase 1 (CBR1) of Candida glabrata (strain ATCC 2001 / BCRC 20586 / JCM 3761 / NBRC 0622 / NRRL Y-65 / CBS 138) (Yeast).